Here is a 191-residue protein sequence, read N- to C-terminus: Glycerol-3-phosphate acyltransferase (191 aa).

5 consecutive transmembrane segments (helical) span residues 5-25, 51-71, 78-98, 114-134, and 153-173; these read IILILSYVIGSIPFSLIIAKI, LAVLALFLDSLKGFVAVYTAQ, DLYIYVSAILAVLGHMFPIWL, IALNISIALAFVFVWLIVFFI, and SFFFQKELFLILLTVAILIFL.

This sequence belongs to the PlsY family. Probably interacts with PlsX.

The protein resides in the cell membrane. It carries out the reaction an acyl phosphate + sn-glycerol 3-phosphate = a 1-acyl-sn-glycero-3-phosphate + phosphate. It participates in lipid metabolism; phospholipid metabolism. Functionally, catalyzes the transfer of an acyl group from acyl-phosphate (acyl-PO(4)) to glycerol-3-phosphate (G3P) to form lysophosphatidic acid (LPA). This enzyme utilizes acyl-phosphate as fatty acyl donor, but not acyl-CoA or acyl-ACP. This chain is Glycerol-3-phosphate acyltransferase, found in Wolbachia pipientis subsp. Culex pipiens (strain wPip).